Reading from the N-terminus, the 191-residue chain is Reticulon-like protein B15 (191 aa).

Positions 13-191 (VADLCLWKDK…SKIPRAPKVE (179 aa)) constitute a Reticulon domain. Transmembrane regions (helical) follow at residues 23 to 43 (INSGITLVMATLFWFLLEFME), 47 to 67 (VPLLCSILLLLMLILFLWAKF), and 122 to 142 (VAIIYNIGSYISLLTILYICL).

It localises to the endoplasmic reticulum membrane. This is Reticulon-like protein B15 (RTNLB15) from Arabidopsis thaliana (Mouse-ear cress).